Here is a 247-residue protein sequence, read N- to C-terminus: Protein NipSnap homolog 3A (247 aa).

N6-acetyllysine occurs at positions 48 and 166.

This sequence belongs to the NipSnap family.

It localises to the cytoplasm. Its subcellular location is the cytosol. This is Protein NipSnap homolog 3A (NIPSNAP3A) from Pongo abelii (Sumatran orangutan).